Consider the following 133-residue polypeptide: Arsenate reductase 1 (133 aa).

Catalysis depends on nucleophile residues C10, C82, and C89. Intrachain disulfides connect C10-C82 and C82-C89.

It belongs to the low molecular weight phosphotyrosine protein phosphatase family. Thioredoxin-coupled ArsC subfamily.

The protein resides in the cytoplasm. The enzyme catalyses arsenate + [thioredoxin]-dithiol + H(+) = arsenite + [thioredoxin]-disulfide + H2O. Catalyzes the reduction of arsenate [As(V)] to arsenite [As(III)]. This chain is Arsenate reductase 1, found in Staphylococcus haemolyticus (strain JCSC1435).